A 307-amino-acid chain; its full sequence is 4-hydroxy-tetrahydrodipicolinate synthase (307 aa).

Threonine 49 is a pyruvate binding site. Tyrosine 138 serves as the catalytic Proton donor/acceptor. Lysine 166 (schiff-base intermediate with substrate) is an active-site residue. Isoleucine 207 contacts pyruvate.

It belongs to the DapA family. As to quaternary structure, homotetramer; dimer of dimers.

The protein resides in the cytoplasm. The enzyme catalyses L-aspartate 4-semialdehyde + pyruvate = (2S,4S)-4-hydroxy-2,3,4,5-tetrahydrodipicolinate + H2O + H(+). It participates in amino-acid biosynthesis; L-lysine biosynthesis via DAP pathway; (S)-tetrahydrodipicolinate from L-aspartate: step 3/4. Catalyzes the condensation of (S)-aspartate-beta-semialdehyde [(S)-ASA] and pyruvate to 4-hydroxy-tetrahydrodipicolinate (HTPA). The polypeptide is 4-hydroxy-tetrahydrodipicolinate synthase (Limosilactobacillus reuteri (strain DSM 20016) (Lactobacillus reuteri)).